A 157-amino-acid polypeptide reads, in one-letter code: Transcription elongation factor GreB (157 aa).

Positions 52–73 (KKLLREIDRRVRYLRKRLEDMR) form a coiled coil.

It belongs to the GreA/GreB family. GreB subfamily.

Necessary for efficient RNA polymerase transcription elongation past template-encoded arresting sites. The arresting sites in DNA have the property of trapping a certain fraction of elongating RNA polymerases that pass through, resulting in locked ternary complexes. Cleavage of the nascent transcript by cleavage factors such as GreA or GreB allows the resumption of elongation from the new 3'terminus. GreB releases sequences of up to 9 nucleotides in length. This Pseudomonas syringae pv. tomato (strain ATCC BAA-871 / DC3000) protein is Transcription elongation factor GreB.